Here is a 696-residue protein sequence, read N- to C-terminus: Translation initiation factor IF-2 (696 aa).

A tr-type G domain is found at 187–361 (ERPPVVTVMG…EMQEIKGIPD (175 aa)). The G1 stretch occupies residues 196-203 (GHVDHGKT). Residue 196-203 (GHVDHGKT) participates in GTP binding. Positions 221–225 (GITQS) are G2. The interval 242-245 (DTPG) is G3. GTP-binding positions include 242–246 (DTPGH) and 296–299 (NKID). The interval 296 to 299 (NKID) is G4. Positions 333 to 335 (SAK) are G5.

This sequence belongs to the TRAFAC class translation factor GTPase superfamily. Classic translation factor GTPase family. IF-2 subfamily.

It localises to the cytoplasm. In terms of biological role, one of the essential components for the initiation of protein synthesis. Protects formylmethionyl-tRNA from spontaneous hydrolysis and promotes its binding to the 30S ribosomal subunits. Also involved in the hydrolysis of GTP during the formation of the 70S ribosomal complex. This chain is Translation initiation factor IF-2, found in Thermosipho africanus (strain TCF52B).